A 294-amino-acid chain; its full sequence is Phenylalanine-4-hydroxylase (294 aa).

The disordered stretch occupies residues 1-20; sequence MSGDGLSNGPPPGARPDWTI. Fe cation-binding residues include His-129, His-134, and Glu-175.

The protein belongs to the biopterin-dependent aromatic amino acid hydroxylase family. Fe(2+) is required as a cofactor.

The enzyme catalyses (6R)-L-erythro-5,6,7,8-tetrahydrobiopterin + L-phenylalanine + O2 = (4aS,6R)-4a-hydroxy-L-erythro-5,6,7,8-tetrahydrobiopterin + L-tyrosine. It participates in amino-acid degradation; L-phenylalanine degradation; acetoacetate and fumarate from L-phenylalanine: step 1/6. This is Phenylalanine-4-hydroxylase (phhA) from Caulobacter vibrioides (strain ATCC 19089 / CIP 103742 / CB 15) (Caulobacter crescentus).